A 227-amino-acid chain; its full sequence is Cytochrome c oxidase subunit 2 (227 aa).

The Mitochondrial intermembrane segment spans residues 1 to 26 (MATWSNFNLQNSASPLMEQIIFFHDH). The chain crosses the membrane as a helical span at residues 27–51 (TLVILIMITILVGYLMISLFFNSYI). Residues 52-62 (NRFLLEGQMIE) lie on the Mitochondrial matrix side of the membrane. Residues 63 to 81 (LIWTILPAITLIFIALPSL) traverse the membrane as a helical segment. Topologically, residues 82-227 (RLLYLLDELN…NFINWINNYS (146 aa)) are mitochondrial intermembrane. Cu cation contacts are provided by H161, C196, E198, C200, H204, and M207. E198 contributes to the Mg(2+) binding site.

Belongs to the cytochrome c oxidase subunit 2 family. As to quaternary structure, component of the cytochrome c oxidase (complex IV, CIV), a multisubunit enzyme composed of a catalytic core of 3 subunits and several supernumerary subunits. The complex exists as a monomer or a dimer and forms supercomplexes (SCs) in the inner mitochondrial membrane with ubiquinol-cytochrome c oxidoreductase (cytochrome b-c1 complex, complex III, CIII). Cu cation serves as cofactor.

The protein resides in the mitochondrion inner membrane. It catalyses the reaction 4 Fe(II)-[cytochrome c] + O2 + 8 H(+)(in) = 4 Fe(III)-[cytochrome c] + 2 H2O + 4 H(+)(out). Its function is as follows. Component of the cytochrome c oxidase, the last enzyme in the mitochondrial electron transport chain which drives oxidative phosphorylation. The respiratory chain contains 3 multisubunit complexes succinate dehydrogenase (complex II, CII), ubiquinol-cytochrome c oxidoreductase (cytochrome b-c1 complex, complex III, CIII) and cytochrome c oxidase (complex IV, CIV), that cooperate to transfer electrons derived from NADH and succinate to molecular oxygen, creating an electrochemical gradient over the inner membrane that drives transmembrane transport and the ATP synthase. Cytochrome c oxidase is the component of the respiratory chain that catalyzes the reduction of oxygen to water. Electrons originating from reduced cytochrome c in the intermembrane space (IMS) are transferred via the dinuclear copper A center (CU(A)) of subunit 2 and heme A of subunit 1 to the active site in subunit 1, a binuclear center (BNC) formed by heme A3 and copper B (CU(B)). The BNC reduces molecular oxygen to 2 water molecules using 4 electrons from cytochrome c in the IMS and 4 protons from the mitochondrial matrix. The polypeptide is Cytochrome c oxidase subunit 2 (COII) (Choristoneura rosaceana (Oblique banded leafroller)).